The sequence spans 164 residues: Anterior gradient protein 2 (164 aa).

The N-terminal stretch at 1 to 20 (METVLKTLFVLLVATSLTLA) is a signal peptide. Short sequence motifs (homodimer stabilization; interchain) lie at residues 34–43 (SRGWGDNLEW) and 49–56 (EGLYKAKT).

This sequence belongs to the AGR family. As to quaternary structure, monomer and homodimer.

It is found in the secreted. Its subcellular location is the endoplasmic reticulum. The sequence is that of Anterior gradient protein 2 from Xenopus tropicalis (Western clawed frog).